The chain runs to 333 residues: MDVVSLDKPFMYFEEIDNELDYEPESANEVAKKLPYQGQLKLLLGELFFLSKLQRHGILDGATVVYIGSAPGTHIRYLRDHFYNLGVIIKWMLIDGRHHDPILNGLRDVTLVTRFVDEEYLRSIKKQLHPSKIILISDVRSKRGGNEPSTADLLSNYALQNVMISILNPVASSLKWRCPFPDQWIKDFYIPHGNKMLQPFAPSYSAEMRLLSIYTGENMRLTRVTKSDAVNYEKKMYYLNKIVRNKVVINFDYPNQEYDYFHMYFMLRTVYCNKTFPTTKAKILFLQQSIFRFLNIPTTSTEKVSHEPIQRKISSKDSMSKNRNSKRSVRGNK.

Tyr-22 serves as a coordination point for mRNA. S-adenosyl-L-methionine is bound by residues Gln-39, Tyr-66, Gly-68, Gly-72, Asp-95, Arg-97, Val-116, and Asp-138. The tract at residues Pro-169 to Ile-249 is binding to NPH-I. The active-site For methyltransferase activity is Lys-175. Residues Arg-177 to Phe-180, Asp-182, Ser-205 to Glu-207, and Glu-233 contribute to the mRNA site. The span at Ser-305 to Ser-320 shows a compositional bias: basic and acidic residues. The tract at residues Ser-305–Lys-333 is disordered. Over residues Arg-323–Lys-333 the composition is skewed to basic residues.

Belongs to the class I-like SAM-binding methyltransferase superfamily. Poxvirus/kinetoplastid 2'-O-MTase family. As to quaternary structure, interacts with poly(A) polymerase catalytic subunit OPG063. Interacts with OPG109 and OPG123; these interactions might help linking transcription to capping and polyadenylation.

Its subcellular location is the virion. The enzyme catalyses a 5'-end (N(7)-methyl 5'-triphosphoguanosine)-ribonucleoside in mRNA + S-adenosyl-L-methionine = a 5'-end (N(7)-methyl 5'-triphosphoguanosine)-(2'-O-methyl-ribonucleoside) in mRNA + S-adenosyl-L-homocysteine + H(+). Displays methyltransferase, positive regulation of the poly(A) polymerase and transcription elongation activities. Involved in the modification of both mRNA ends and in intermediate and late gene positive transcription elongation. At the mRNAs 5' end, methylates the ribose 2' OH group of the first transcribed nucleotide, thereby producing a 2'-O-methylpurine cap. At the 3' end, functions as a processivity factor which stimulates the activity of the viral poly(A) polymerase OPG063 that creates mRNA's poly(A) tail. In the presence of OPG102, OPG063 does not dissociate from the RNA allowing tail elongation to around 250 adenylates. The protein is Cap-specific mRNA (nucleoside-2'-O-)-methyltransferase (OPG102) of Cynomys gunnisoni (Gunnison's prairie dog).